Consider the following 83-residue polypeptide: Small ribosomal subunit protein uS17 (83 aa).

The protein belongs to the universal ribosomal protein uS17 family. As to quaternary structure, part of the 30S ribosomal subunit.

One of the primary rRNA binding proteins, it binds specifically to the 5'-end of 16S ribosomal RNA. In Chlamydia abortus (strain DSM 27085 / S26/3) (Chlamydophila abortus), this protein is Small ribosomal subunit protein uS17.